A 209-amino-acid chain; its full sequence is GTP-binding nuclear protein Ran1B (209 aa).

The 162-residue stretch at 1–162 (NFKLVIVGDG…LYLARKLAGD (162 aa)) folds into the Small GTPase Ran-type domain. 9-16 (DGGTGKTT) serves as a coordination point for GTP. The tract at residues 28-36 (KKYEPTIGV) is switch-I. GTP contacts are provided by residues Gly-59, 113 to 116 (NKVD), and 141 to 143 (SAK). The tract at residues 59–75 (GQEKFGGLRDGYYIHGQ) is switch-II. Residues 187-200 (QHEAELAAAASQPL) are compositionally biased toward low complexity. Residues 187–209 (QHEAELAAAASQPLPDDDDDAFD) are disordered.

It belongs to the small GTPase superfamily. Ran family. In terms of assembly, found in a nuclear export complex with RanGTP, exportin and pre-miRNA.

Its subcellular location is the nucleus. GTP-binding protein involved in nucleocytoplasmic transport. Required for the import of protein into the nucleus and also for RNA export. Involved in chromatin condensation and control of cell cycle. The chain is GTP-binding nuclear protein Ran1B (RAN1B) from Lotus japonicus (Lotus corniculatus var. japonicus).